Reading from the N-terminus, the 350-residue chain is Small ribosomal subunit biogenesis GTPase RsgA (350 aa).

A compositionally biased stretch (polar residues) spans 1–17 (MSKNKLSKGQQRRVNAN). A disordered region spans residues 1-27 (MSKNKLSKGQQRRVNANHQRRLKTSAE). The CP-type G domain occupies 104 to 273 (TSVLTRPDFY…VIDSPGVREF (170 aa)). Residues 160-163 (NKID) and 214-222 (GQSGVGKSS) contribute to the GTP site. Zn(2+)-binding residues include Cys297, Cys302, His304, and Cys310.

The protein belongs to the TRAFAC class YlqF/YawG GTPase family. RsgA subfamily. Monomer. Associates with 30S ribosomal subunit, binds 16S rRNA. Requires Zn(2+) as cofactor.

Its subcellular location is the cytoplasm. Its function is as follows. One of several proteins that assist in the late maturation steps of the functional core of the 30S ribosomal subunit. Helps release RbfA from mature subunits. May play a role in the assembly of ribosomal proteins into the subunit. Circularly permuted GTPase that catalyzes slow GTP hydrolysis, GTPase activity is stimulated by the 30S ribosomal subunit. The chain is Small ribosomal subunit biogenesis GTPase RsgA from Salmonella agona (strain SL483).